A 1207-amino-acid polypeptide reads, in one-letter code: Chromosomal serine/threonine-protein kinase JIL-1 (1207 aa).

The segment covering 1-19 (MSRLQKQNYEILSGTSTSR) has biased composition (polar residues). Disordered stretches follow at residues 1–119 (MSRL…ASAR), 164–183 (QDME…SSSL), and 210–230 (SSST…LDLD). 2 positions are modified to phosphoserine: S29 and S31. Residues 45 to 69 (LNGQLVANGNGKTRKNSNSETMTNG) show a composition bias toward polar residues. The span at 88 to 97 (NYNNNNNNNN) shows a compositional bias: low complexity. Residues 98–108 (SISATNGQYTN) show a composition bias toward polar residues. Positions 109–118 (SSSKTTSASA) are enriched in low complexity. Positions 164–178 (QDMEEDEPNGIEIDE) are enriched in acidic residues. A compositionally biased stretch (polar residues) spans 213-226 (TTPSYAMPTSNSTP). One can recognise a Protein kinase 1 domain in the interval 261–530 (FKIIRVLGTG…ASEIKEHPFF (270 aa)). Residues 267 to 275 (LGTGAYGRV) and K293 each bind ATP. The active-site Proton acceptor is the D389. S424 is subject to Phosphoserine. Residues 531-599 (NGINWQELRT…VAPEHLEQMR (69 aa)) form the AGC-kinase C-terminal domain. At T588 the chain carries Phosphothreonine. Positions 623–886 (LELGTRTSNG…LSDILDSEWL (264 aa)) constitute a Protein kinase 2 domain. Residues 629 to 637 (TSNGAYGTC) and K652 each bind ATP. The active-site Proton acceptor is D739. At T1045 the chain carries Phosphothreonine. At S1047 the chain carries Phosphoserine. A disordered region spans residues 1168-1197 (TFPRPKAQLKRTKREPKVPRPPTRVQPERA).

Belongs to the protein kinase superfamily. Ser/Thr protein kinase family. As to quaternary structure, interacts with lola. Interacts with proteins of the male specific lethal (MSL) dosage compensation complex; this interaction is mediated by the kinase domains. It depends on Mg(2+) as a cofactor. Post-translationally, autophosphorylated in vitro.

The protein resides in the nucleus. Its subcellular location is the chromosome. The catalysed reaction is L-seryl-[protein] + ATP = O-phospho-L-seryl-[protein] + ADP + H(+). It catalyses the reaction L-threonyl-[protein] + ATP = O-phospho-L-threonyl-[protein] + ADP + H(+). Functionally, phosphorylates 'Ser-10' of histone H3. May regulate gene expression by establishing or maintaining the structure of more open chromatin regions. Also required for normal polytene chromosome structure, for oogenesis and for viability throughout development. Regulates the structure of polytene chromosomes in salivary glands. May phosphorylate 'Ser-1' of histone H2A. The chain is Chromosomal serine/threonine-protein kinase JIL-1 from Drosophila melanogaster (Fruit fly).